The primary structure comprises 438 residues: GDP-mannose 6-dehydrogenase (438 aa).

NAD(+)-binding residues include tyrosine 10, valine 11, aspartate 30, lysine 35, threonine 86, and threonine 124. Residues glutamate 161, lysine 210, asparagine 214, histidine 217, asparagine 225, tyrosine 256, tyrosine 257, arginine 259, phenylalanine 262, and glycine 265 each contribute to the GDP-alpha-D-mannuronate site. The active site involves cysteine 268. Lysine 271 is a binding site for NAD(+). Position 324 (lysine 324) interacts with GDP-alpha-D-mannuronate. Position 331 (arginine 331) interacts with NAD(+).

The protein belongs to the UDP-glucose/GDP-mannose dehydrogenase family.

It catalyses the reaction GDP-alpha-D-mannose + 2 NAD(+) + H2O = GDP-alpha-D-mannuronate + 2 NADH + 3 H(+). It participates in glycan biosynthesis; alginate biosynthesis. Its function is as follows. Catalyzes the oxidation of guanosine diphospho-D-mannose (GDP-D-mannose) to GDP-D-mannuronic acid, a precursor for alginate polymerization. The alginate layer causes a mucoid phenotype and provides a protective barrier against host immune defenses and antibiotics. This chain is GDP-mannose 6-dehydrogenase (algD), found in Pseudomonas syringae pv. syringae.